The following is a 434-amino-acid chain: MKTRTQQIEELQKEWTQPRWEGITRPYSAEDVVKLRGSVNPECTLAQLGAAKMWRLLHGESKKGYINSLGALTGGQALQQAKAGIEAVYLSGWQVAADANLAASMYPDQSLYPANSVPAVVERINNTFRRADQIQWSAGIEPGDPRYVDYFLPIVADAEAGFGGVLNAFELMKAMIEAGAAAVHFEDQLASVKKCGHMGGKVLVPTQEAIQKLVAARLAADVTGVPTLLVARTDADAADLITSDCDPYDSEFITGERTSEGFFRTHAGIEQAISRGLAYAPYADLVWCETSTPDLELARRFAQAIHAKYPGKLLAYNCSPSFNWQKNLDDKTIASFQQQLSDMGYKFQFITLAGIHSMWFNMFDLANAYAQGEGMKHYVEKVQQPEFAAAKDGYTFVSHQQEVGTGYFDKVTTIIQGGTSSVTALTGSTEESQF.

91–93 (SGW) serves as a coordination point for substrate. Aspartate 157 is a binding site for Mg(2+). Residue cysteine 195 is the Proton acceptor of the active site. Substrate-binding positions include 196–197 (GH), arginine 232, 317–321 (NCSPS), and threonine 351.

It belongs to the isocitrate lyase/PEP mutase superfamily. Isocitrate lyase family. In terms of assembly, homotetramer. Mg(2+) is required as a cofactor.

The enzyme catalyses D-threo-isocitrate = glyoxylate + succinate. Its pathway is carbohydrate metabolism; glyoxylate cycle; (S)-malate from isocitrate: step 1/2. Involved in the metabolic adaptation in response to environmental changes. Catalyzes the reversible formation of succinate and glyoxylate from isocitrate, a key step of the glyoxylate cycle, which operates as an anaplerotic route for replenishing the tricarboxylic acid cycle during growth on fatty acid substrates. This chain is Isocitrate lyase (aceA), found in Escherichia coli O6:H1 (strain CFT073 / ATCC 700928 / UPEC).